A 471-amino-acid polypeptide reads, in one-letter code: Argininosuccinate lyase (471 aa).

This sequence belongs to the lyase 1 family. Argininosuccinate lyase subfamily.

It is found in the cytoplasm. It carries out the reaction 2-(N(omega)-L-arginino)succinate = fumarate + L-arginine. The protein operates within amino-acid biosynthesis; L-arginine biosynthesis; L-arginine from L-ornithine and carbamoyl phosphate: step 3/3. The protein is Argininosuccinate lyase of Paramagnetospirillum magneticum (strain ATCC 700264 / AMB-1) (Magnetospirillum magneticum).